We begin with the raw amino-acid sequence, 318 residues long: Nodulation protein D 2 (318 aa).

Residues 6–63 (LDLNLLVALDALTTERNLTAAARSINLSQPAMSAAIGRLRDYFRDELFTMNGRELRLT) form the HTH lysR-type domain. The H-T-H motif DNA-binding region spans 23 to 42 (LTAAARSINLSQPAMSAAIG).

It belongs to the LysR transcriptional regulatory family.

NodD regulates the expression of the nodABCFE genes which encode other nodulation proteins. NodD is also a negative regulator of its own expression. Binds flavonoids as inducers. The chain is Nodulation protein D 2 (nodD2) from Rhizobium leguminosarum bv. phaseoli.